Here is a 383-residue protein sequence, read N- to C-terminus: Succinyl-diaminopimelate desuccinylase (383 aa).

H73 contacts Zn(2+). D75 is a catalytic residue. D107 lines the Zn(2+) pocket. E141 serves as the catalytic Proton acceptor. Residues E142, E170, and H356 each contribute to the Zn(2+) site.

This sequence belongs to the peptidase M20A family. DapE subfamily. In terms of assembly, homodimer. It depends on Zn(2+) as a cofactor. Co(2+) is required as a cofactor.

The enzyme catalyses N-succinyl-(2S,6S)-2,6-diaminopimelate + H2O = (2S,6S)-2,6-diaminopimelate + succinate. It functions in the pathway amino-acid biosynthesis; L-lysine biosynthesis via DAP pathway; LL-2,6-diaminopimelate from (S)-tetrahydrodipicolinate (succinylase route): step 3/3. Catalyzes the hydrolysis of N-succinyl-L,L-diaminopimelic acid (SDAP), forming succinate and LL-2,6-diaminopimelate (DAP), an intermediate involved in the bacterial biosynthesis of lysine and meso-diaminopimelic acid, an essential component of bacterial cell walls. In Pseudomonas fluorescens (strain Pf0-1), this protein is Succinyl-diaminopimelate desuccinylase.